A 227-amino-acid chain; its full sequence is Ribose-5-phosphate isomerase A (227 aa).

Residues 28 to 31, 85 to 88, and 98 to 101 contribute to the substrate site; these read TGST, DGAD, and KGGG. E107 serves as the catalytic Proton acceptor. K125 is a substrate binding site.

It belongs to the ribose 5-phosphate isomerase family. As to quaternary structure, homodimer.

The catalysed reaction is aldehydo-D-ribose 5-phosphate = D-ribulose 5-phosphate. It functions in the pathway carbohydrate degradation; pentose phosphate pathway; D-ribose 5-phosphate from D-ribulose 5-phosphate (non-oxidative stage): step 1/1. In terms of biological role, catalyzes the reversible conversion of ribose-5-phosphate to ribulose 5-phosphate. This chain is Ribose-5-phosphate isomerase A, found in Limosilactobacillus reuteri (strain DSM 20016) (Lactobacillus reuteri).